The primary structure comprises 111 residues: Nucleoid-associated protein Teth514_0034 (111 aa).

The protein belongs to the YbaB/EbfC family. In terms of assembly, homodimer.

The protein resides in the cytoplasm. The protein localises to the nucleoid. In terms of biological role, binds to DNA and alters its conformation. May be involved in regulation of gene expression, nucleoid organization and DNA protection. In Thermoanaerobacter sp. (strain X514), this protein is Nucleoid-associated protein Teth514_0034.